The following is a 339-amino-acid chain: Quinolinate synthase (339 aa).

The iminosuccinate site is built by histidine 63 and serine 81. Cysteine 126 contributes to the [4Fe-4S] cluster binding site. Residues 152–154 (YVN) and serine 169 contribute to the iminosuccinate site. [4Fe-4S] cluster is bound at residue cysteine 211. Iminosuccinate contacts are provided by residues 237-239 (HPE) and threonine 254. Cysteine 297 contacts [4Fe-4S] cluster.

It belongs to the quinolinate synthase family. Type 2 subfamily. It depends on [4Fe-4S] cluster as a cofactor.

Its subcellular location is the cytoplasm. It catalyses the reaction iminosuccinate + dihydroxyacetone phosphate = quinolinate + phosphate + 2 H2O + H(+). Its pathway is cofactor biosynthesis; NAD(+) biosynthesis; quinolinate from iminoaspartate: step 1/1. In terms of biological role, catalyzes the condensation of iminoaspartate with dihydroxyacetone phosphate to form quinolinate. This chain is Quinolinate synthase, found in Xylella fastidiosa (strain Temecula1 / ATCC 700964).